A 220-amino-acid polypeptide reads, in one-letter code: Thiopurine S-methyltransferase (220 aa).

Residues W10, L45, E66, and R123 each contribute to the S-adenosyl-L-methionine site.

This sequence belongs to the class I-like SAM-binding methyltransferase superfamily. TPMT family.

It is found in the cytoplasm. It carries out the reaction S-adenosyl-L-methionine + a thiopurine = S-adenosyl-L-homocysteine + a thiopurine S-methylether.. This chain is Thiopurine S-methyltransferase, found in Pseudomonas syringae pv. syringae (strain B728a).